The chain runs to 196 residues: Small ribosomal subunit protein uS4c (196 aa).

The segment at 15–36 is disordered; sequence LGTLPGLTSKRPRSGSDLKNPL. In terms of domain architecture, S4 RNA-binding spans 89 to 150; sequence MRLDNILFRL…KQRSKALIQN (62 aa).

It belongs to the universal ribosomal protein uS4 family. As to quaternary structure, part of the 30S ribosomal subunit. Contacts protein S5. The interaction surface between S4 and S5 is involved in control of translational fidelity.

The protein resides in the plastid. It is found in the chloroplast. Its function is as follows. One of the primary rRNA binding proteins, it binds directly to 16S rRNA where it nucleates assembly of the body of the 30S subunit. In terms of biological role, with S5 and S12 plays an important role in translational accuracy. The chain is Small ribosomal subunit protein uS4c (rps4) from Yucca filamentosa (Bear-grass).